Reading from the N-terminus, the 372-residue chain is Probable butyrate kinase (372 aa).

It belongs to the acetokinase family.

It is found in the cytoplasm. It carries out the reaction butanoate + ATP = butanoyl phosphate + ADP. In Oleidesulfovibrio alaskensis (strain ATCC BAA-1058 / DSM 17464 / G20) (Desulfovibrio alaskensis), this protein is Probable butyrate kinase.